The sequence spans 466 residues: MSNGTIVQCIGAVVDIQFPRDNMPKIYEALTLVDEGSSFAEKGLTLEVQQQLGDGVVRTIALGSSDGLRRGMQVAGTGAPISVPVGHGTLGRIMDVLGRPIDEAGPIASDEKRAIHQPAPRFDELSPSVELLETGIKVIDLVCPFAKGGKVGLFGGAGVGKTVNMMELINNIAKQHSGLSVFAGVGERTREGNDFYHEMEESNVLDKVAMVFGQMNEPPGNRLRVALTGLTMAEKFRDEGRDILFFVDNIYRYTLAGTEVSALLGRMPSAVGYQPTLAEEMGVLQERITSTKTGSITSIQAVYVPADDLTDPSPATTFQHLDSTVVLSRDIAALGIYPAVDPLDSSSRQLDPQVVGEEHYQVARGVQQTLQRYKELRDIIAILGMDELSPEDKQAVARARKIQRFLSQPFHVAEVFTGSPGKYVSLAETIRGFKMIVDGECDALPEQAFYMVGTIDEAFEKAKKLQ.

An ATP-binding site is contributed by 155 to 162; it reads GGAGVGKT.

This sequence belongs to the ATPase alpha/beta chains family. As to quaternary structure, F-type ATPases have 2 components, CF(1) - the catalytic core - and CF(0) - the membrane proton channel. CF(1) has five subunits: alpha(3), beta(3), gamma(1), delta(1), epsilon(1). CF(0) has three main subunits: a(1), b(2) and c(9-12). The alpha and beta chains form an alternating ring which encloses part of the gamma chain. CF(1) is attached to CF(0) by a central stalk formed by the gamma and epsilon chains, while a peripheral stalk is formed by the delta and b chains.

It is found in the cell inner membrane. It carries out the reaction ATP + H2O + 4 H(+)(in) = ADP + phosphate + 5 H(+)(out). In terms of biological role, produces ATP from ADP in the presence of a proton gradient across the membrane. The catalytic sites are hosted primarily by the beta subunits. The polypeptide is ATP synthase subunit beta (Bordetella bronchiseptica (strain ATCC BAA-588 / NCTC 13252 / RB50) (Alcaligenes bronchisepticus)).